The chain runs to 296 residues: Probable redox regulatory protein BQ2027_MB0506C (296 aa).

This sequence belongs to the Rv0495c family.

Its function is as follows. Essential for maintaining intracellular redox homeostasis. The sequence is that of Probable redox regulatory protein BQ2027_MB0506C from Mycobacterium bovis (strain ATCC BAA-935 / AF2122/97).